A 231-amino-acid polypeptide reads, in one-letter code: Large ribosomal subunit protein uL1 (231 aa).

Belongs to the universal ribosomal protein uL1 family. As to quaternary structure, part of the 50S ribosomal subunit.

Its function is as follows. Binds directly to 23S rRNA. The L1 stalk is quite mobile in the ribosome, and is involved in E site tRNA release. Functionally, protein L1 is also a translational repressor protein, it controls the translation of the L11 operon by binding to its mRNA. The polypeptide is Large ribosomal subunit protein uL1 (Ralstonia pickettii (strain 12J)).